The primary structure comprises 80 residues: Cortexin-3 (80 aa).

The chain crosses the membrane as a helical span at residues 28–48 (TTFVFVILLFIFLGILIVRCF).

This sequence belongs to the cortexin family.

It is found in the membrane. This Mus musculus (Mouse) protein is Cortexin-3 (Ctxn3).